Here is a 36-residue protein sequence, read N- to C-terminus: Photosystem I reaction center subunit VIII (36 aa).

Residues 8-28 traverse the membrane as a helical segment; the sequence is SLFVPLVGLVFPAIAMASLFL.

Belongs to the PsaI family.

Its subcellular location is the plastid. It is found in the chloroplast thylakoid membrane. May help in the organization of the PsaL subunit. This Brassica oleracea (Wild cabbage) protein is Photosystem I reaction center subunit VIII.